The chain runs to 358 residues: Carbohydrate sulfotransferase 10 (358 aa).

Residues 1–6 are Cytoplasmic-facing; the sequence is MHHQWL. Residues 7-27 form a helical; Signal-anchor for type II membrane protein membrane-spanning segment; the sequence is LLAACFWVIFMFMVASKFITL. Residues 28-358 lie on the Lumenal side of the membrane; sequence TFKDPDGYGA…GYRVPDFLLN (331 aa). Residue Asn101 is glycosylated (N-linked (GlcNAc...) asparagine). 3'-phosphoadenylyl sulfate is bound by residues 129-135 and 191-199; these read PKVGNTQ and RDPFERLIS. A glycan (N-linked (GlcNAc...) asparagine) is linked at Asn318.

Belongs to the sulfotransferase 2 family. In terms of tissue distribution, predominantly expressed in hypertrophic, prehypertrophic and proliferative chondrocytes at E12 but is down-regulated in epiphyseal chondrocytes.

The protein localises to the golgi apparatus membrane. Catalyzes the transfer of sulfate to position 3 of terminal glucuronic acid of both protein- and lipid-linked oligosaccharides. Participates in biosynthesis of HNK-1 carbohydrate structure, a sulfated glucuronyl-lactosaminyl residue carried by many neural recognition molecules, which is involved in cell interactions during ontogenetic development and in synaptic plasticity in the adult. The sequence is that of Carbohydrate sulfotransferase 10 (CHST10) from Gallus gallus (Chicken).